The following is a 140-amino-acid chain: uncharacterized protein (140 aa).

This is an uncharacterized protein from Bacillus subtilis (strain 168).